The following is a 250-amino-acid chain: 2,3-bisphosphoglycerate-dependent phosphoglycerate mutase (250 aa).

Substrate is bound by residues 10–17 (RHGESQWN), 23–24 (TG), Arg-62, 89–92 (ERHY), Lys-100, 116–117 (RR), and 185–186 (GN). The active-site Tele-phosphohistidine intermediate is His-11. Glu-89 acts as the Proton donor/acceptor in catalysis.

Belongs to the phosphoglycerate mutase family. BPG-dependent PGAM subfamily. As to quaternary structure, homodimer.

It carries out the reaction (2R)-2-phosphoglycerate = (2R)-3-phosphoglycerate. It participates in carbohydrate degradation; glycolysis; pyruvate from D-glyceraldehyde 3-phosphate: step 3/5. Functionally, catalyzes the interconversion of 2-phosphoglycerate and 3-phosphoglycerate. The sequence is that of 2,3-bisphosphoglycerate-dependent phosphoglycerate mutase from Serratia proteamaculans (strain 568).